The sequence spans 337 residues: Glyceraldehyde-3-phosphate dehydrogenase (337 aa).

Residues 12–13 (RI), D34, and R79 each bind NAD(+). D-glyceraldehyde 3-phosphate contacts are provided by residues 150-152 (SCT), T181, 210-211 (TG), and R233. C151 acts as the Nucleophile in catalysis. N315 contacts NAD(+).

Belongs to the glyceraldehyde-3-phosphate dehydrogenase family. In terms of assembly, homotetramer.

It localises to the cytoplasm. It carries out the reaction D-glyceraldehyde 3-phosphate + phosphate + NAD(+) = (2R)-3-phospho-glyceroyl phosphate + NADH + H(+). The protein operates within carbohydrate degradation; glycolysis; pyruvate from D-glyceraldehyde 3-phosphate: step 1/5. This Coccidioides immitis (strain RS) (Valley fever fungus) protein is Glyceraldehyde-3-phosphate dehydrogenase (GPD).